The primary structure comprises 246 residues: UDP-N-acetyl-D-mannosaminuronic acid transferase (246 aa).

The protein belongs to the glycosyltransferase 26 family.

It carries out the reaction UDP-N-acetyl-alpha-D-mannosaminouronate + N-acetyl-alpha-D-glucosaminyl-di-trans,octa-cis-undecaprenyl diphosphate = beta-D-ManNAcA-(1-&gt;4)-alpha-D-GlcNAc-di-trans,octa-cis-undecaprenyl diphosphate + UDP + H(+). The protein operates within bacterial outer membrane biogenesis; enterobacterial common antigen biosynthesis. In terms of biological role, catalyzes the synthesis of Und-PP-GlcNAc-ManNAcA (Lipid II), the second lipid-linked intermediate involved in enterobacterial common antigen (ECA) synthesis. This Salmonella choleraesuis (strain SC-B67) protein is UDP-N-acetyl-D-mannosaminuronic acid transferase.